The following is a 178-amino-acid chain: uncharacterized protein (178 aa).

Belongs to the mycobacterial PPE family.

This is an uncharacterized protein from Mycobacterium tuberculosis (strain CDC 1551 / Oshkosh).